Here is a 503-residue protein sequence, read N- to C-terminus: Cysteine--tRNA ligase (503 aa).

Cys-31 contacts Zn(2+). A 'HIGH' region motif is present at residues 33-43 (PTVYDYAHIGN). Cys-225, His-264, and Glu-268 together coordinate Zn(2+). The 'KMSKS' region motif lies at 297–301 (KMSKS). Residue Lys-300 participates in ATP binding.

This sequence belongs to the class-I aminoacyl-tRNA synthetase family. As to quaternary structure, monomer. Zn(2+) serves as cofactor.

It localises to the cytoplasm. The enzyme catalyses tRNA(Cys) + L-cysteine + ATP = L-cysteinyl-tRNA(Cys) + AMP + diphosphate. This chain is Cysteine--tRNA ligase, found in Bartonella tribocorum (strain CIP 105476 / IBS 506).